The chain runs to 285 residues: Energy-coupling factor transporter ATP-binding protein EcfA2 (285 aa).

One can recognise an ABC transporter domain in the interval 6–242 (LKVEELNYNY…KEVIRKVNLR (237 aa)). 39-46 (GGNGVGKS) lines the ATP pocket.

It belongs to the ABC transporter superfamily. Energy-coupling factor EcfA family. Forms a stable energy-coupling factor (ECF) transporter complex composed of 2 membrane-embedded substrate-binding proteins (S component), 2 ATP-binding proteins (A component) and 2 transmembrane proteins (T component).

Its subcellular location is the cell membrane. Functionally, ATP-binding (A) component of a common energy-coupling factor (ECF) ABC-transporter complex. Unlike classic ABC transporters this ECF transporter provides the energy necessary to transport a number of different substrates. This Clostridium perfringens (strain SM101 / Type A) protein is Energy-coupling factor transporter ATP-binding protein EcfA2.